The primary structure comprises 345 residues: Anthranilate phosphoribosyltransferase (345 aa).

5-phospho-alpha-D-ribose 1-diphosphate is bound by residues glycine 79, 82-83 (GD), threonine 87, 89-92 (NVST), 106-114 (KHGNRAVSG), and serine 118. Glycine 79 serves as a coordination point for anthranilate. Mg(2+) is bound at residue serine 91. Asparagine 109 contacts anthranilate. Position 164 (arginine 164) interacts with anthranilate. Residues aspartate 223 and glutamate 224 each coordinate Mg(2+).

It belongs to the anthranilate phosphoribosyltransferase family. In terms of assembly, homodimer. It depends on Mg(2+) as a cofactor.

The catalysed reaction is N-(5-phospho-beta-D-ribosyl)anthranilate + diphosphate = 5-phospho-alpha-D-ribose 1-diphosphate + anthranilate. It functions in the pathway amino-acid biosynthesis; L-tryptophan biosynthesis; L-tryptophan from chorismate: step 2/5. In terms of biological role, catalyzes the transfer of the phosphoribosyl group of 5-phosphorylribose-1-pyrophosphate (PRPP) to anthranilate to yield N-(5'-phosphoribosyl)-anthranilate (PRA). The polypeptide is Anthranilate phosphoribosyltransferase (Saccharolobus islandicus (strain L.S.2.15 / Lassen #1) (Sulfolobus islandicus)).